We begin with the raw amino-acid sequence, 168 residues long: Disulfide bond formation protein B 2 (168 aa).

The Cytoplasmic segment spans residues 1–9; sequence MSLACLRSF. A helical transmembrane segment spans residues 10 to 26; the sequence is FLPALLASTAVLVASFH. The Periplasmic portion of the chain corresponds to 27 to 44; the sequence is LESVVGLVPCALCFSQRL. Residues cysteine 36 and cysteine 39 are joined by a disulfide bond. Residues 45 to 61 form a helical membrane-spanning segment; it reads MLGVYALVCLAALVHSP. Residues 62–67 lie on the Cytoplasmic side of the membrane; the sequence is AARGRR. Residues 68–85 traverse the membrane as a helical segment; that stretch reads AYAGLALASAFGGALLAG. The Periplasmic segment spans residues 86-140; sequence RHVWLQGDPQVVDGCHLPVEQVLQRPLGEILQMFLLGSPDCVSISWSFLDLTLPE. A disulfide bridge links cysteine 100 with cysteine 126. The helical transmembrane segment at 141 to 159 threads the bilayer; that stretch reads WSLLAFLLLAAMPLSWLVA. Residues 160–168 lie on the Cytoplasmic side of the membrane; sequence YRFRKRAMA.

This sequence belongs to the DsbB family.

It is found in the cell inner membrane. In terms of biological role, required for disulfide bond formation in some periplasmic proteins. Acts by oxidizing the DsbA protein. The polypeptide is Disulfide bond formation protein B 2 (Pseudomonas entomophila (strain L48)).